Here is a 257-residue protein sequence, read N- to C-terminus: NAD kinase (257 aa).

The active-site Proton acceptor is aspartate 46. Residues 46–47 (DG), histidine 51, 116–117 (NE), aspartate 146, alanine 154, 157–162 (TAYNLS), and glutamine 218 contribute to the NAD(+) site.

It belongs to the NAD kinase family. It depends on a divalent metal cation as a cofactor.

The protein resides in the cytoplasm. The catalysed reaction is NAD(+) + ATP = ADP + NADP(+) + H(+). In terms of biological role, involved in the regulation of the intracellular balance of NAD and NADP, and is a key enzyme in the biosynthesis of NADP. Catalyzes specifically the phosphorylation on 2'-hydroxyl of the adenosine moiety of NAD to yield NADP. The protein is NAD kinase of Rhizobium meliloti (strain 1021) (Ensifer meliloti).